A 248-amino-acid chain; its full sequence is Probable transcriptional regulatory protein PSPTO_3980 (248 aa).

It belongs to the TACO1 family.

The protein resides in the cytoplasm. This is Probable transcriptional regulatory protein PSPTO_3980 from Pseudomonas syringae pv. tomato (strain ATCC BAA-871 / DC3000).